We begin with the raw amino-acid sequence, 229 residues long: Large ribosomal subunit protein uL1 (229 aa).

This sequence belongs to the universal ribosomal protein uL1 family. Part of the 50S ribosomal subunit.

Functionally, binds directly to 23S rRNA. The L1 stalk is quite mobile in the ribosome, and is involved in E site tRNA release. Protein L1 is also a translational repressor protein, it controls the translation of the L11 operon by binding to its mRNA. The sequence is that of Large ribosomal subunit protein uL1 from Clostridium botulinum (strain 657 / Type Ba4).